The primary structure comprises 196 residues: Ribosome maturation factor RimP (196 aa).

A disordered region spans residues 163-196 (GLAPSKPTGPAPKRPKPKTNSSSNEPAAKKPRAE).

This sequence belongs to the RimP family.

It is found in the cytoplasm. Functionally, required for maturation of 30S ribosomal subunits. The polypeptide is Ribosome maturation factor RimP (Stenotrophomonas maltophilia (strain R551-3)).